The chain runs to 515 residues: RNA-binding region-containing protein 3 (515 aa).

Positions Met-1–Asp-26 are disordered. The residue at position 21 (Ser-21) is a Phosphoserine. The 76-residue stretch at Arg-27 to Glu-102 folds into the RRM 1 domain. Disordered stretches follow at residues His-107–Glu-133, Leu-215–Arg-254, and Glu-337–Asn-369. Ser-108 is subject to Phosphoserine. A compositionally biased stretch (basic and acidic residues) spans Ala-115–Glu-133. The segment covering Pro-218–Pro-230 has biased composition (pro residues). Basic and acidic residues predominate over residues Glu-337–Asp-348. At Ser-349 the chain carries Phosphoserine. Residues Cys-419–Ser-502 enclose the RRM 2 domain.

Component of the U11/U12 snRNPs that are part of the U12-type spliceosome. Found in a complex with m(7)G-capped U12 snRNA. Interacts with PDCD7.

Its subcellular location is the nucleus. In terms of biological role, participates in pre-mRNA U12-dependent splicing, performed by the minor spliceosome which removes U12-type introns. U12-type introns comprises less than 1% of all non-coding sequences. Binds to the 3'-stem-loop of m(7)G-capped U12 snRNA. This chain is RNA-binding region-containing protein 3 (Rnpc3), found in Rattus norvegicus (Rat).